A 264-amino-acid polypeptide reads, in one-letter code: MKKITINDLMKWKQEGRKFATSTAYDASFAQLFESQEMPVLLVGDSLGMVLQGETDTLPVTVDDIAYHTRCVRKGSPNCLLMADMPFMSYATPEQACENAAKLVRAGANMVKIEGGDWLVDTVKMLTERAVPVCAHLGLTPQSVNIFGGYKVQGREQDKADRMVRDALALQEAGAQIVLLECVPAELANRITQILDVPVIGIGAGNGTDGQILVMHDMFGISANYMPKFSKNFLAETGDIRQAVAKYIEDVASGAFPDLAHTIA.

Mg(2+) is bound by residues Asp45 and Asp84. 3-methyl-2-oxobutanoate-binding positions include 45-46 (DS), Asp84, and Lys112. Glu114 provides a ligand contact to Mg(2+). Glu181 serves as the catalytic Proton acceptor.

The protein belongs to the PanB family. Homodecamer; pentamer of dimers. Mg(2+) is required as a cofactor.

Its subcellular location is the cytoplasm. The enzyme catalyses 3-methyl-2-oxobutanoate + (6R)-5,10-methylene-5,6,7,8-tetrahydrofolate + H2O = 2-dehydropantoate + (6S)-5,6,7,8-tetrahydrofolate. It participates in cofactor biosynthesis; (R)-pantothenate biosynthesis; (R)-pantoate from 3-methyl-2-oxobutanoate: step 1/2. Its function is as follows. Catalyzes the reversible reaction in which hydroxymethyl group from 5,10-methylenetetrahydrofolate is transferred onto alpha-ketoisovalerate to form ketopantoate. In Vibrio cholerae serotype O1 (strain ATCC 39541 / Classical Ogawa 395 / O395), this protein is 3-methyl-2-oxobutanoate hydroxymethyltransferase.